Here is a 65-residue protein sequence, read N- to C-terminus: Metallothionein (65 aa).

The protein belongs to the metallothionein superfamily. Type 4 family.

Its function is as follows. Metallothioneins have a high content of cysteine residues that bind various heavy metals. This chain is Metallothionein, found in Paracentrotus lividus (Common sea urchin).